The sequence spans 460 residues: Cysteine--tRNA ligase (460 aa).

Residue C28 participates in Zn(2+) binding. Residues 30–40 carry the 'HIGH' region motif; the sequence is MTVYDYCHLGH. Zn(2+) contacts are provided by C209, H234, and E238. Residues 266 to 270 carry the 'KMSKS' region motif; that stretch reads KMSKS. K269 contacts ATP.

Belongs to the class-I aminoacyl-tRNA synthetase family. Monomer. Zn(2+) is required as a cofactor.

Its subcellular location is the cytoplasm. The catalysed reaction is tRNA(Cys) + L-cysteine + ATP = L-cysteinyl-tRNA(Cys) + AMP + diphosphate. This is Cysteine--tRNA ligase from Pseudomonas aeruginosa (strain LESB58).